Here is a 229-residue protein sequence, read N- to C-terminus: UPF0173 metal-dependent hydrolase Hbut_0886 (229 aa).

Belongs to the UPF0173 family.

In Hyperthermus butylicus (strain DSM 5456 / JCM 9403 / PLM1-5), this protein is UPF0173 metal-dependent hydrolase Hbut_0886.